The following is a 145-amino-acid chain: D-aminoacyl-tRNA deacylase (145 aa).

Residues 137 to 138 (GP) carry the Gly-cisPro motif, important for rejection of L-amino acids motif.

The protein belongs to the DTD family. Homodimer.

The protein localises to the cytoplasm. It carries out the reaction glycyl-tRNA(Ala) + H2O = tRNA(Ala) + glycine + H(+). It catalyses the reaction a D-aminoacyl-tRNA + H2O = a tRNA + a D-alpha-amino acid + H(+). Its function is as follows. An aminoacyl-tRNA editing enzyme that deacylates mischarged D-aminoacyl-tRNAs. Also deacylates mischarged glycyl-tRNA(Ala), protecting cells against glycine mischarging by AlaRS. Acts via tRNA-based rather than protein-based catalysis; rejects L-amino acids rather than detecting D-amino acids in the active site. By recycling D-aminoacyl-tRNA to D-amino acids and free tRNA molecules, this enzyme counteracts the toxicity associated with the formation of D-aminoacyl-tRNA entities in vivo and helps enforce protein L-homochirality. The chain is D-aminoacyl-tRNA deacylase from Francisella tularensis subsp. holarctica (strain LVS).